The following is a 355-amino-acid chain: 3-dehydroquinate synthase (355 aa).

Residues Glu-71–Lys-76, Gly-105–Asp-109, Thr-129–Ser-130, Lys-142, and Lys-151 contribute to the NAD(+) site. Glu-184, His-246, and His-263 together coordinate Zn(2+).

It belongs to the sugar phosphate cyclases superfamily. Dehydroquinate synthase family. The cofactor is Co(2+). Zn(2+) is required as a cofactor. NAD(+) serves as cofactor.

It localises to the cytoplasm. It carries out the reaction 7-phospho-2-dehydro-3-deoxy-D-arabino-heptonate = 3-dehydroquinate + phosphate. Its pathway is metabolic intermediate biosynthesis; chorismate biosynthesis; chorismate from D-erythrose 4-phosphate and phosphoenolpyruvate: step 2/7. Its function is as follows. Catalyzes the conversion of 3-deoxy-D-arabino-heptulosonate 7-phosphate (DAHP) to dehydroquinate (DHQ). The chain is 3-dehydroquinate synthase from Streptococcus pneumoniae (strain Hungary19A-6).